The primary structure comprises 736 residues: Phosphoribosylformylglycinamidine synthase subunit PurL (736 aa).

The active site involves histidine 48. ATP-binding residues include tyrosine 51 and lysine 90. Glutamate 92 is a binding site for Mg(2+). Substrate-binding positions include 93–96 and arginine 115; that span reads SHNH. Histidine 94 (proton acceptor) is an active-site residue. A Mg(2+)-binding site is contributed by aspartate 116. Glutamine 239 serves as a coordination point for substrate. A Mg(2+)-binding site is contributed by aspartate 267. Substrate is bound at residue 311-313; it reads ESQ. Residues aspartate 492 and glycine 529 each contribute to the ATP site. Asparagine 530 contributes to the Mg(2+) binding site. Serine 532 lines the substrate pocket.

The protein belongs to the FGAMS family. Monomer. Part of the FGAM synthase complex composed of 1 PurL, 1 PurQ and 2 PurS subunits.

Its subcellular location is the cytoplasm. It catalyses the reaction N(2)-formyl-N(1)-(5-phospho-beta-D-ribosyl)glycinamide + L-glutamine + ATP + H2O = 2-formamido-N(1)-(5-O-phospho-beta-D-ribosyl)acetamidine + L-glutamate + ADP + phosphate + H(+). Its pathway is purine metabolism; IMP biosynthesis via de novo pathway; 5-amino-1-(5-phospho-D-ribosyl)imidazole from N(2)-formyl-N(1)-(5-phospho-D-ribosyl)glycinamide: step 1/2. In terms of biological role, part of the phosphoribosylformylglycinamidine synthase complex involved in the purines biosynthetic pathway. Catalyzes the ATP-dependent conversion of formylglycinamide ribonucleotide (FGAR) and glutamine to yield formylglycinamidine ribonucleotide (FGAM) and glutamate. The FGAM synthase complex is composed of three subunits. PurQ produces an ammonia molecule by converting glutamine to glutamate. PurL transfers the ammonia molecule to FGAR to form FGAM in an ATP-dependent manner. PurS interacts with PurQ and PurL and is thought to assist in the transfer of the ammonia molecule from PurQ to PurL. This chain is Phosphoribosylformylglycinamidine synthase subunit PurL, found in Beijerinckia indica subsp. indica (strain ATCC 9039 / DSM 1715 / NCIMB 8712).